Here is a 101-residue protein sequence, read N- to C-terminus: uncharacterized protein (101 aa).

The N-terminal stretch at 1-17 is a signal peptide; that stretch reads MKKAAVLAVVLSLGLAG. Cysteine 18 is lipidated: N-palmitoyl cysteine. A lipid anchor (S-diacylglycerol cysteine) is attached at cysteine 18.

The protein resides in the cell membrane. This is an uncharacterized protein from Pasteurella multocida (strain Pm70).